The sequence spans 324 residues: Putative 12-oxophytodienoate reductase-like protein 1 (324 aa).

Methionine 1 is modified (N-acetylmethionine). FMN is bound by residues 14 to 16 (PMA), alanine 47, and glutamine 89. The segment covering 99–113 (QDCQPNGESPVSSTD) has biased composition (polar residues). The interval 99–128 (QDCQPNGESPVSSTDKPFADDPSNEFTPPR) is disordered. Residue 160-163 (HGAH) participates in substrate binding. The active-site Proton donor is the tyrosine 165. FMN is bound at residue arginine 212. Arginine 252 is a substrate binding site. Residues glycine 282 and 303 to 304 (GR) each bind FMN.

It belongs to the NADH:flavin oxidoreductase/NADH oxidase family. Requires FMN as cofactor.

Its function is as follows. Putative oxophytodienoate reductase that may be involved in the biosynthesis or metabolism of oxylipin signaling molecules. This Arabidopsis thaliana (Mouse-ear cress) protein is Putative 12-oxophytodienoate reductase-like protein 1.